Reading from the N-terminus, the 338-residue chain is Methionine import ATP-binding protein MetN 2 (338 aa).

The region spanning 2–242 (IQLEGVSVDF…PQHAFTRQLV (241 aa)) is the ABC transporter domain. 39–46 (GTSGAGKS) is an ATP binding site.

This sequence belongs to the ABC transporter superfamily. Methionine importer (TC 3.A.1.24) family. The complex is composed of two ATP-binding proteins (MetN), two transmembrane proteins (MetI) and a solute-binding protein (MetQ).

The protein resides in the cell inner membrane. It carries out the reaction L-methionine(out) + ATP + H2O = L-methionine(in) + ADP + phosphate + H(+). The enzyme catalyses D-methionine(out) + ATP + H2O = D-methionine(in) + ADP + phosphate + H(+). Part of the ABC transporter complex MetNIQ involved in methionine import. Responsible for energy coupling to the transport system. This chain is Methionine import ATP-binding protein MetN 2, found in Pectobacterium atrosepticum (strain SCRI 1043 / ATCC BAA-672) (Erwinia carotovora subsp. atroseptica).